A 244-amino-acid chain; its full sequence is RNA transcription, translation and transport factor protein (244 aa).

An N6-acetyllysine mark is found at lysine 20, lysine 62, and lysine 98.

The protein belongs to the RTRAF family. Homodimer. Interacts with FAM98A (via N- and C-terminus). Interacts with NIN; which may prevent phosphorylation of NIN. Interacts with POLR2A. Component of a tRNA-splicing ligase complex with FAM98B, DDX1 and RTCB. As to quaternary structure, (Microbial infection) Interacts with influenza A virus (IAV) RNA polymerase subunits PA, PB1 and PB2, and nucleocapsid NP. Associates with IAV polymerase complexes both in the nucleus and cytosol. Associates with IAV ribonucleoproteins (vRNP) packaged in virions. Interacts with hepatitis C virus core protein p19. Widely expressed. Expressed at high level in heart and skeletal muscle. Expressed at intermediate level in liver, pancreas, fetal brain and fetal lung. Weakly expressed in adult brain, adult lung, placenta, fetal liver and fetal kidney. Overexpressed in many brain tumors.

Its subcellular location is the nucleus. It localises to the cytoplasm. It is found in the cytosol. The protein resides in the perinuclear region. The protein localises to the cytoskeleton. Its subcellular location is the microtubule organizing center. It localises to the centrosome. Functionally, RNA-binding protein involved in modulation of mRNA transcription by Polymerase II. Component of the tRNA-splicing ligase complex and is required for tRNA ligation. May be required for RNA transport. (Microbial infection) In case of infection by influenza virus A (IVA), is involved in viral replication. This chain is RNA transcription, translation and transport factor protein, found in Homo sapiens (Human).